Here is a 335-residue protein sequence, read N- to C-terminus: Tryptophan--tRNA ligase (335 aa).

Residues 11-13 (QPT) and 19-20 (GN) contribute to the ATP site. Residues 12–20 (PTGNLHLGN) carry the 'HIGH' region motif. Asp135 is a binding site for L-tryptophan. Residues 147-149 (GED), Val189, and 198-202 (KMSKS) contribute to the ATP site. The short motif at 198–202 (KMSKS) is the 'KMSKS' region element.

It belongs to the class-I aminoacyl-tRNA synthetase family. Homodimer.

It is found in the cytoplasm. It carries out the reaction tRNA(Trp) + L-tryptophan + ATP = L-tryptophyl-tRNA(Trp) + AMP + diphosphate + H(+). Functionally, catalyzes the attachment of tryptophan to tRNA(Trp). This chain is Tryptophan--tRNA ligase, found in Nostoc sp. (strain PCC 7120 / SAG 25.82 / UTEX 2576).